A 465-amino-acid polypeptide reads, in one-letter code: Ribulose bisphosphate carboxylase large chain (465 aa).

N6,N6,N6-trimethyllysine is present on K4. 2 residues coordinate substrate: N113 and T163. The Proton acceptor role is filled by K165. K167 contacts substrate. Residues K191, D193, and E194 each coordinate Mg(2+). Position 191 is an N6-carboxylysine (K191). Residue H284 is the Proton acceptor of the active site. Substrate is bound by residues R285, H317, and S369.

The protein belongs to the RuBisCO large chain family. Type I subfamily. Heterohexadecamer of 8 large chains and 8 small chains; disulfide-linked. The disulfide link is formed within the large subunit homodimers. Requires Mg(2+) as cofactor. In terms of processing, the disulfide bond which can form in the large chain dimeric partners within the hexadecamer appears to be associated with oxidative stress and protein turnover.

The protein localises to the plastid. It is found in the chloroplast. The enzyme catalyses 2 (2R)-3-phosphoglycerate + 2 H(+) = D-ribulose 1,5-bisphosphate + CO2 + H2O. The catalysed reaction is D-ribulose 1,5-bisphosphate + O2 = 2-phosphoglycolate + (2R)-3-phosphoglycerate + 2 H(+). Its function is as follows. RuBisCO catalyzes two reactions: the carboxylation of D-ribulose 1,5-bisphosphate, the primary event in carbon dioxide fixation, as well as the oxidative fragmentation of the pentose substrate in the photorespiration process. Both reactions occur simultaneously and in competition at the same active site. The chain is Ribulose bisphosphate carboxylase large chain from Platytheca verticillata.